Reading from the N-terminus, the 308-residue chain is Protein translocase subunit SecF (308 aa).

6 consecutive transmembrane segments (helical) span residues 12-32, 127-147, 152-172, 182-202, 234-254, and 262-282; these read YFIF…TKGF, AKNA…YITI, IYAL…IGFI, PFIA…IVIF, VYTS…GGST, and LLVG…PLVY.

It belongs to the SecD/SecF family. SecF subfamily. Forms a complex with SecD. Part of the essential Sec protein translocation apparatus which comprises SecA, SecYEG and auxiliary proteins SecDF. Other proteins may also be involved.

The protein localises to the cell inner membrane. In terms of biological role, part of the Sec protein translocase complex. Interacts with the SecYEG preprotein conducting channel. SecDF uses the proton motive force (PMF) to complete protein translocation after the ATP-dependent function of SecA. In Sebaldella termitidis (strain ATCC 33386 / NCTC 11300), this protein is Protein translocase subunit SecF.